A 480-amino-acid chain; its full sequence is RAC-alpha serine/threonine-protein kinase (480 aa).

Residues 5 to 108 form the PH domain; sequence AIVKEGWLHK…WATAIQTVAD (104 aa). 2 positions are modified to N6-acetyllysine: Lys-14 and Lys-20. 14–19 contacts 1D-myo-inositol 1,3,4,5-tetrakisphosphate; sequence KRGEYI. Residues 23–25 and Asn-53 each bind 1D-myo-inositol 1,3,4,5-tetrakisphosphate; that span reads RPR. Cys-60 and Cys-77 form a disulfide bridge. Arg-86 contributes to the 1D-myo-inositol 1,3,4,5-tetrakisphosphate binding site. The disordered stretch occupies residues 114–137; the sequence is EEETMDFRSGSPSDNSGAEEMEVS. Phosphoserine is present on Ser-124. Phosphoserine; alternate occurs at positions 126 and 129. O-linked (GlcNAc) serine; alternate glycosylation is found at Ser-126 and Ser-129. A Protein kinase domain is found at 150 to 408; that stretch reads FEYLKLLGKG…AKEIMQHRFF (259 aa). Residue 156 to 164 coordinates ATP; it reads LGKGTFGKV. The residue at position 176 (Tyr-176) is a Phosphotyrosine; by TNK2. Lys-179 provides a ligand contact to ATP. The active-site Proton acceptor is Asp-274. Lys-284 is covalently cross-linked (Glycyl lysine isopeptide (Lys-Gly) (interchain with G-Cter in ubiquitin)). Cys-296 and Cys-310 are disulfide-bonded. O-linked (GlcNAc) threonine glycosylation is present at Thr-305. Phosphothreonine; by IKKE, PDPK1 and TBK1 is present on Thr-308. The O-linked (GlcNAc) threonine glycan is linked to Thr-312. Residues 409-480 enclose the AGC-kinase C-terminal domain; it reads ANIVWQDVYE…QFSYSASGTA (72 aa). Thr-448 bears the Phosphothreonine mark. Thr-450 is modified (phosphothreonine; by MTOR). Residues 450-480 are disordered; sequence TPPDQDDSMECVDSERRPHFPQFSYSASGTA. O-linked (GlcNAc) serine; alternate glycosylation is present at Ser-473. A Phosphoserine; by IKKE, MTOR, PRKDC and TBK1; alternate modification is found at Ser-473. The residue at position 474 (Tyr-474) is a Phosphotyrosine. Position 477 is a phosphoserine; by CDK2 and MTOR (Ser-477). Thr-479 carries the post-translational modification Phosphothreonine; by CDK2 and MTOR.

The protein belongs to the protein kinase superfamily. AGC Ser/Thr protein kinase family. RAC subfamily. As to quaternary structure, interacts with and phosphorylated by PDPK1. Interacts with AGAP2 (isoform 2/PIKE-A); the interaction occurs in the presence of guanine nucleotides. Interacts with AKTIP. Interacts (via PH domain) with MTCP1, TCL1A and TCL1B. Interacts with CDKN1B; the interaction phosphorylates CDKN1B promoting 14-3-3 binding and cell-cycle progression. Interacts with MAP3K5 and TRAF6. Interacts with BAD, PPP2R5B, STK3 and STK4. Interacts (via PH domain) with SIRT1. Interacts with SRPK2 in a phosphorylation-dependent manner. Interacts with TRIM13; the interaction ubiquitinates AKT1 leading to its proteasomal degradation. Interacts with RAF1. Interacts (via the C-terminus) with CCDC88A (via its C-terminus) and THEM4 (via its C-terminus). Interacts with GRB10; the interaction leads to GRB10 phosphorylation thus promoting YWHAE-binding. Interacts with KCTD20. Interacts with BTBD10. Interacts with PA2G4. Interacts with KIF14; the interaction is detected in the plasma membrane upon INS stimulation and promotes AKT1 phosphorylation. Interacts with FAM83B; activates the PI3K/AKT signaling cascade. Interacts with WDFY2 (via WD repeats 1-3). Forms a complex with WDFY2 and FOXO1. Interacts with FAM168A. Interacts with SYAP1 (via phosphorylated form and BSD domain); this interaction is enhanced in a mTORC2-mediated manner in response to epidermal growth factor (EGF) stimulation and activates AKT1. Interacts with PKHM3. Interacts with FKBP5/FKBP51; promoting interaction between Akt/AKT1 and PHLPP1, thereby enhancing dephosphorylation and subsequent activation of Akt/AKT1. Interacts with TMEM175; leading to formation of the lysoK(GF) complex. In terms of processing, O-GlcNAcylation at Thr-305 and Thr-312 inhibits activating phosphorylation at Thr-308 via disrupting the interaction between AKT1 and PDPK1. O-GlcNAcylation at Ser-473 also probably interferes with phosphorylation at this site. Post-translationally, phosphorylation on Thr-308, Ser-473 and Tyr-474 is required for full activity. Phosphorylation of the activation loop at Thr-308 by PDPK1/PDK1 is a prerequisite for full activation. Phosphorylation by mTORC2 in response to growth factors plays a key role in AKT1 activation: mTORC2 phosphorylates different sites depending on the context, such as Thr-450, Ser-473, Ser-477 or Thr-479, thereby facilitating subsequent phosphorylation of the activation loop by PDPK1/PDK1. Phosphorylation at Ser-473 by mTORC2 promotes ubiquitination and degradation by the proteasome. Also phosphorylated at Ser-477 and Thr-479 by CDK2, facilitating subsequent phosphorylation of the activation loop by PDPK1/PDK1. Activated TNK2 phosphorylates it on Tyr-176 resulting in its binding to the anionic plasma membrane phospholipid PA. This phosphorylated form localizes to the cell membrane, where it is targeted by PDPK1 and PDPK2 for further phosphorylations on Thr-308 and Ser-473 leading to its activation. Phosphorylated at Thr-308 and Ser-473 by IKBKE and TBK1. Ser-473 phosphorylation is enhanced by interaction with AGAP2 isoform 2 (PIKE-A). Ser-473 phosphorylation is enhanced by signaling through activated FLT3. Ser-473 is dephosphorylated by PHLPP. Dephosphorylated at Thr-308 and Ser-473 by PP2A phosphatase. The phosphorylated form of PPP2R5B is required for bridging AKT1 with PP2A phosphatase. Ser-473 is dephosphorylated by CPPED1, leading to termination of signaling. AIM2 acts as an inhibitor of AKT1 by inhibiting phosphorylation Ser-473: AIM2 acts both by inhibiting the activity of PRKDC/DNA-PK kinase and promoting dephosphorylation by PP2A phosphatase. Ubiquitinated; undergoes both 'Lys-48'- and 'Lys-63'-linked polyubiquitination. TRAF6-induced 'Lys-63'-linked AKT1 ubiquitination is critical for phosphorylation and activation. When ubiquitinated, it translocates to the plasma membrane, where it becomes phosphorylated. When fully phosphorylated and translocated into the nucleus, undergoes 'Lys-48'-polyubiquitination catalyzed by TTC3, leading to its degradation by the proteasome. Also ubiquitinated by TRIM13 leading to its proteasomal degradation. Ubiquitinated via 'Lys-48'-linked polyubiquitination by ZNRF1, leading to its degradation by the proteasome. Phosphorylated, undergoes 'Lys-48'-linked polyubiquitination preferentially at Lys-284 catalyzed by MUL1, leading to its proteasomal degradation. In terms of processing, acetylated on Lys-14 and Lys-20 by the histone acetyltransferases EP300 and KAT2B. Acetylation results in reduced phosphorylation and inhibition of activity. Deacetylated at Lys-14 and Lys-20 by SIRT1. SIRT1-mediated deacetylation relieves the inhibition. Post-translationally, cleavage by caspase-3/CASP3. Cleaved at the caspase-3 consensus site Asp-462 during apoptosis, resulting in down-regulation of the AKT signaling pathway and decreased cell survival. Widely expressed. Low levels found in liver with slightly higher levels present in thymus and testis.

The protein localises to the cytoplasm. The protein resides in the nucleus. It localises to the cell membrane. It is found in the mitochondrion intermembrane space. It carries out the reaction L-seryl-[protein] + ATP = O-phospho-L-seryl-[protein] + ADP + H(+). The catalysed reaction is L-threonyl-[protein] + ATP = O-phospho-L-threonyl-[protein] + ADP + H(+). Three specific sites, one in the kinase domain (Thr-308) and the two other ones in the C-terminal regulatory region (Ser-473 and Tyr-474), need to be phosphorylated for its full activation. In terms of biological role, AKT1 is one of 3 closely related serine/threonine-protein kinases (AKT1, AKT2 and AKT3) called the AKT kinase, and which regulate many processes including metabolism, proliferation, cell survival, growth and angiogenesis. This is mediated through serine and/or threonine phosphorylation of a range of downstream substrates. Over 100 substrate candidates have been reported so far, but for most of them, no isoform specificity has been reported. AKT is responsible of the regulation of glucose uptake by mediating insulin-induced translocation of the SLC2A4/GLUT4 glucose transporter to the cell surface. Phosphorylation of PTPN1 at 'Ser-50' negatively modulates its phosphatase activity preventing dephosphorylation of the insulin receptor and the attenuation of insulin signaling. Phosphorylation of TBC1D4 triggers the binding of this effector to inhibitory 14-3-3 proteins, which is required for insulin-stimulated glucose transport. AKT also regulates the storage of glucose in the form of glycogen by phosphorylating GSK3A at 'Ser-21' and GSK3B at 'Ser-9', resulting in inhibition of its kinase activity. Phosphorylation of GSK3 isoforms by AKT is also thought to be one mechanism by which cell proliferation is driven. AKT also regulates cell survival via the phosphorylation of MAP3K5 (apoptosis signal-related kinase). Phosphorylation of 'Ser-83' decreases MAP3K5 kinase activity stimulated by oxidative stress and thereby prevents apoptosis. AKT mediates insulin-stimulated protein synthesis by phosphorylating TSC2 at 'Ser-939' and 'Thr-1462', thereby activating the mTORC1 signaling pathway, and leading to both phosphorylation of 4E-BP1 and in activation of RPS6KB1. Also regulates the mTORC1 signaling pathway by catalyzing phosphorylation of CASTOR1 and DEPDC5. AKT plays a role as key modulator of the AKT-mTOR signaling pathway controlling the tempo of the process of newborn neurons integration during adult neurogenesis, including correct neuron positioning, dendritic development and synapse formation. Part of a positive feedback loop of mTORC2 signaling by mediating phosphorylation of MAPKAP1/SIN1, promoting mTORC2 activation. AKT is involved in the phosphorylation of members of the FOXO factors (Forkhead family of transcription factors), leading to binding of 14-3-3 proteins and cytoplasmic localization. In particular, FOXO1 is phosphorylated at 'Thr-24', 'Ser-256' and 'Ser-319'. FOXO3 and FOXO4 are phosphorylated on equivalent sites. AKT has an important role in the regulation of NF-kappa-B-dependent gene transcription and positively regulates the activity of CREB1 (cyclic AMP (cAMP)-response element binding protein). The phosphorylation of CREB1 induces the binding of accessory proteins that are necessary for the transcription of pro-survival genes such as BCL2 and MCL1. AKT phosphorylates 'Ser-454' on ATP citrate lyase (ACLY), thereby potentially regulating ACLY activity and fatty acid synthesis. Activates the 3B isoform of cyclic nucleotide phosphodiesterase (PDE3B) via phosphorylation of 'Ser-273', resulting in reduced cyclic AMP levels and inhibition of lipolysis. Phosphorylates PIKFYVE on 'Ser-318', which results in increased PI(3)P-5 activity. The Rho GTPase-activating protein DLC1 is another substrate and its phosphorylation is implicated in the regulation cell proliferation and cell growth. Signals downstream of phosphatidylinositol 3-kinase (PI(3)K) to mediate the effects of various growth factors such as platelet-derived growth factor (PDGF), epidermal growth factor (EGF), insulin and insulin-like growth factor 1 (IGF1). AKT mediates the antiapoptotic effects of IGF1. Essential for the SPATA13-mediated regulation of cell migration and adhesion assembly and disassembly. May be involved in the regulation of the placental development. Phosphorylates STK4/MST1 at 'Thr-120' and 'Thr-387' leading to inhibition of its: kinase activity, nuclear translocation, autophosphorylation and ability to phosphorylate FOXO3. Phosphorylates STK3/MST2 at 'Thr-117' and 'Thr-384' leading to inhibition of its: cleavage, kinase activity, autophosphorylation at Thr-180, binding to RASSF1 and nuclear translocation. Phosphorylates SRPK2 and enhances its kinase activity towards SRSF2 and ACIN1 and promotes its nuclear translocation. Phosphorylates RAF1 at 'Ser-259' and negatively regulates its activity. Phosphorylation of BAD stimulates its pro-apoptotic activity. Phosphorylates KAT6A at 'Thr-369' and this phosphorylation inhibits the interaction of KAT6A with PML and negatively regulates its acetylation activity towards p53/TP53. Phosphorylates palladin (PALLD), modulating cytoskeletal organization and cell motility. Phosphorylates prohibitin (PHB), playing an important role in cell metabolism and proliferation. Phosphorylates CDKN1A, for which phosphorylation at 'Thr-145' induces its release from CDK2 and cytoplasmic relocalization. These recent findings indicate that the AKT1 isoform has a more specific role in cell motility and proliferation. Phosphorylates CLK2 thereby controlling cell survival to ionizing radiation. Phosphorylates PCK1 at 'Ser-90', reducing the binding affinity of PCK1 to oxaloacetate and changing PCK1 into an atypical protein kinase activity using GTP as donor. Also acts as an activator of TMEM175 potassium channel activity in response to growth factors: forms the lysoK(GF) complex together with TMEM175 and acts by promoting TMEM175 channel activation, independently of its protein kinase activity. Acts as a negative regulator of the cGAS-STING pathway by mediating phosphorylation of CGAS during mitosis, leading to its inhibition. Acts as a regulator of mitochondrial calcium uptake by mediating phosphorylation of MICU1 in the mitochondrial intermembrane space, impairing MICU1 maturation. Acts as an inhibitor of tRNA methylation by mediating phosphorylation of the N-terminus of METTL1, thereby inhibiting METTL1 methyltransferase activity. In response to LPAR1 receptor pathway activation, phosphorylates Rabin8/RAB3IP which alters its activity and phosphorylates WDR44 which induces WDR44 binding to Rab11, thereby switching Rab11 vesicular function from preciliary trafficking to endocytic recycling. The polypeptide is RAC-alpha serine/threonine-protein kinase (Akt1) (Mus musculus (Mouse)).